A 453-amino-acid polypeptide reads, in one-letter code: tRNA modification GTPase MnmE (453 aa).

3 residues coordinate (6S)-5-formyl-5,6,7,8-tetrahydrofolate: Arg23, Glu80, and Lys120. Residues 216 to 375 form the TrmE-type G domain; sequence GSKIVIIGKP…LIKYLKDLNC (160 aa). Asn226 is a K(+) binding site. GTP-binding positions include 226–231, 245–251, and 270–273; these read NSGKSS, TSIEGTT, and DTAG. Ser230 is a Mg(2+) binding site. The K(+) site is built by Thr245, Ile247, and Thr250. Thr251 contacts Mg(2+). Lys453 is a binding site for (6S)-5-formyl-5,6,7,8-tetrahydrofolate.

Belongs to the TRAFAC class TrmE-Era-EngA-EngB-Septin-like GTPase superfamily. TrmE GTPase family. In terms of assembly, homodimer. Heterotetramer of two MnmE and two MnmG subunits. Requires K(+) as cofactor.

Its subcellular location is the cytoplasm. Exhibits a very high intrinsic GTPase hydrolysis rate. Involved in the addition of a carboxymethylaminomethyl (cmnm) group at the wobble position (U34) of certain tRNAs, forming tRNA-cmnm(5)s(2)U34. The polypeptide is tRNA modification GTPase MnmE (Wigglesworthia glossinidia brevipalpis).